Consider the following 302-residue polypeptide: Succinate--CoA ligase [ADP-forming] subunit alpha (302 aa).

CoA-binding positions include 17-20 (TGST), lysine 43, and 96-98 (ITE). Tyrosine 159 contacts substrate. Histidine 247 acts as the Tele-phosphohistidine intermediate in catalysis.

It belongs to the succinate/malate CoA ligase alpha subunit family. Heterotetramer of two alpha and two beta subunits.

It carries out the reaction succinate + ATP + CoA = succinyl-CoA + ADP + phosphate. The catalysed reaction is GTP + succinate + CoA = succinyl-CoA + GDP + phosphate. Its pathway is carbohydrate metabolism; tricarboxylic acid cycle; succinate from succinyl-CoA (ligase route): step 1/1. Succinyl-CoA synthetase functions in the citric acid cycle (TCA), coupling the hydrolysis of succinyl-CoA to the synthesis of either ATP or GTP and thus represents the only step of substrate-level phosphorylation in the TCA. The alpha subunit of the enzyme binds the substrates coenzyme A and phosphate, while succinate binding and nucleotide specificity is provided by the beta subunit. This chain is Succinate--CoA ligase [ADP-forming] subunit alpha, found in Staphylococcus aureus (strain MSSA476).